We begin with the raw amino-acid sequence, 469 residues long: Putative pyridoxal-dependent decarboxylase domain-containing protein 2 (469 aa).

Residues 12–40 (TLAEMGKNLKEAVKMLEDSQRRTEEENGK) adopt a coiled-coil conformation. Residues 28-44 (EDSQRRTEEENGKKLIS) show a composition bias toward basic and acidic residues. The disordered stretch occupies residues 28–47 (EDSQRRTEEENGKKLISRDI).

This sequence belongs to the group II decarboxylase family. Pyridoxal 5'-phosphate is required as a cofactor.

In Homo sapiens (Human), this protein is Putative pyridoxal-dependent decarboxylase domain-containing protein 2 (PDXDC2P).